A 178-amino-acid chain; its full sequence is Caveolin-1 (178 aa).

Ser2 carries the N-acetylserine modification. Position 2 is a phosphoserine (Ser2). The required for homooligomerization stretch occupies residues 2–94; it reads SGGKYVDSEG…WKASFTTFTV (93 aa). Residues 2-104 lie on the Cytoplasmic side of the membrane; that stretch reads SGGKYVDSEG…TKYWFYRLLS (103 aa). An N6-acetyllysine; alternate modification is found at Lys5. A Glycyl lysine isopeptide (Lys-Gly) (interchain with G-Cter in ubiquitin); alternate cross-link involves residue Lys5. Phosphotyrosine is present on Tyr6. Ser9 carries the post-translational modification Phosphoserine. Tyr14 is subject to Phosphotyrosine; by ABL1. Tyr25 bears the Phosphotyrosine mark. Residues Lys26, Lys30, Lys39, Lys47, and Lys57 each participate in a glycyl lysine isopeptide (Lys-Gly) (interchain with G-Cter in ubiquitin) cross-link. Residues 82-94 are interaction with CAVIN3; that stretch reads DGIWKASFTTFTV. Residues 105-125 constitute an intramembrane region (helical); the sequence is TLFGIPMALIWGIYFAILSFL. At 126-178 the chain is on the cytoplasmic side; that stretch reads HIWAVVPCIKSFLIEIQCIGRVYSIYIHTFCDPLFEAVGKLFSNIRINMQKEI. The segment at 131–142 is interacts with SPRY1, SPRY2, SPRY3 and SPRY4; that stretch reads VPCIKSFLIEIQ. 3 S-palmitoyl cysteine lipidation sites follow: Cys133, Cys143, and Cys156. The interacts with SPRY1, SPRY2, and SPRY4 stretch occupies residues 149 to 160; sequence SIYIHTFCDPLF. The segment at 167–178 is interacts with SPRY1, SPRY2, SPRY3 and SPRY4; the sequence is FSNIRINMQKEI.

Belongs to the caveolin family. In terms of assembly, homooligomer. Interacts with GLIPR2. Interacts with NOSTRIN. Interacts with SNAP25 and STX1A. Interacts (via the N-terminus) with DPP4; the interaction is direct. Interacts with CTNNB1, CDH1 and JUP. Interacts with PACSIN2; this interaction induces membrane tubulation. Interacts with SLC7A9. Interacts with BMX and BTK. Interacts with TGFBR1. Interacts with CAVIN3 (via leucine-zipper domain) in a cholesterol-sensitive manner. Interacts with CAVIN1. Interacts with EHD2 in a cholesterol-dependent manner. Forms a ternary complex with UBXN6 and VCP; mediates CAV1 targeting to lysosomes for degradation. Interacts with ABCG1; this interaction regulates ABCG1-mediated cholesterol efflux. Interacts with NEU3; this interaction enhances NEU3 sialidase activity within caveola. Interacts (via C-terminus) with SPRY1, SPRY2 (via C-terminus), SPRY3, and SPRY4. Interacts with IGFBP5; this interaction allows trafficking of IGFBP5 from the plasma membrane to the nucleus. Phosphorylated at Tyr-14 by ABL1 in response to oxidative stress. In terms of processing, ubiquitinated. Undergo monoubiquitination and multi- and/or polyubiquitination. Monoubiquitination of N-terminal lysines promotes integration in a ternary complex with UBXN6 and VCP which promotes oligomeric CAV1 targeting to lysosomes for degradation. Ubiquitinated by ZNRF1; leading to degradation and modulation of the TLR4-mediated immune response.

It is found in the golgi apparatus membrane. It localises to the cell membrane. The protein localises to the membrane. Its subcellular location is the caveola. The protein resides in the membrane raft. In terms of biological role, may act as a scaffolding protein within caveolar membranes. Forms a stable heterooligomeric complex with CAV2 that targets to lipid rafts and drives caveolae formation. Mediates the recruitment of CAVIN proteins (CAVIN1/2/3/4) to the caveolae. Interacts directly with G-protein alpha subunits and can functionally regulate their activity. Involved in the costimulatory signal essential for T-cell receptor (TCR)-mediated T-cell activation. Its binding to DPP4 induces T-cell proliferation and NF-kappa-B activation in a T-cell receptor/CD3-dependent manner. Recruits CTNNB1 to caveolar membranes and may regulate CTNNB1-mediated signaling through the Wnt pathway. Negatively regulates TGFB1-mediated activation of SMAD2/3 by mediating the internalization of TGFBR1 from membrane rafts leading to its subsequent degradation. Binds 20(S)-hydroxycholesterol (20(S)-OHC). This Dasypus novemcinctus (Nine-banded armadillo) protein is Caveolin-1 (CAV1).